The primary structure comprises 71 residues: MELPFTNLEVAFILLAFFIFSLFTLASIYTSPNERNEDDDFHLKEKRRKRKEFKGKKNCSDEEHKIETMQP.

The helical transmembrane segment at 8 to 28 threads the bilayer; the sequence is LEVAFILLAFFIFSLFTLASI. A compositionally biased stretch (basic residues) spans 48–57; it reads RKRKEFKGKK. The tract at residues 48 to 71 is disordered; that stretch reads RKRKEFKGKKNCSDEEHKIETMQP. An N-linked (GlcNAc...) asparagine glycan is attached at asparagine 58. The span at 58–71 shows a compositional bias: basic and acidic residues; it reads NCSDEEHKIETMQP.

Its subcellular location is the membrane. The polypeptide is Small integral membrane protein 31 (Mus musculus (Mouse)).